The following is a 4687-amino-acid chain: Plectin (4687 aa).

The interval 1 to 1473 (MVAGMLMPLD…SELTTLTSQY (1473 aa)) is globular 1. Phosphoserine is present on arginine 21. A Phosphotyrosine modification is found at valine 26. The interval 111–158 (RRRSPHVQTMQGPLGCPPKRGPLPAEDPAREERQVYRRKEREEGAPET) is disordered. The segment covering 137 to 154 (DPAREERQVYRRKEREEG) has biased composition (basic and acidic residues). Residues 181–406 (DERDRVQKKT…YVSSLYDAMP (226 aa)) are actin-binding. Calponin-homology (CH) domains are found at residues 185-288 (RVQK…LHFK) and 301-406 (MTAK…DAMP). One copy of the Spectrin 1 repeat lies at 648 to 722 (LQSTQRRPEL…ERARNDESQL (75 aa)). The residue at position 723 (serine 723) is a Phosphoserine. Spectrin repeat units lie at residues 743-827 (KLLN…REDH) and 840-933 (LQTQ…AIVQ). A Phosphothreonine modification is found at threonine 818. One can recognise an SH3 domain in the interval 944 to 1001 (RGHVPLLAVCDYKQVEVTVHKGDQCQLVGPAQPFHWKVLSSSGSEAAVPSVCFLVPPP). At serine 1050 the chain carries Phosphoserine. The Spectrin 4 repeat unit spans residues 1318-1418 (RERVTQLLER…QKFAKQYINA (101 aa)). A Phosphoserine modification is found at serine 1438. Coiled coils occupy residues 1472-1692 (QYIK…ERWL) and 1724-2760 (SFAE…TSQA). The tract at residues 1474–2758 (IKFISETLRR…LAHSEEIATS (1285 aa)) is central fibrous rod domain. Residues 1623 to 1647 (EEAEAQKRQAQEEAERLRRQVQDES) form a disordered region. Position 1724 is a phosphoserine (serine 1724). Lysine 1728 carries the N6-acetyllysine modification. Disordered regions lie at residues 1741–1764 (VTVT…ERAR), 1796–1846 (SLAQ…GTAQ), 2096–2139 (EDTM…AEEE), 2164–2188 (LRER…KRLQ), and 2218–2307 (RLRS…DAEM). Composition is skewed to basic and acidic residues over residues 1801-1839 (DAEK…KQRQ), 2096-2111 (EDTM…EAAR), and 2119-2131 (EEQR…ERVQ). Positions 2173 to 2182 (ARQLQLAQEA) are enriched in low complexity. Over residues 2218–2261 (RLRSEAEAARRAAEEAEEAREQAEREAAQSRKQVEEAERLKQSA) the composition is skewed to basic and acidic residues. The span at 2262 to 2275 (EEQAQAQAQAQAAA) shows a compositional bias: low complexity. Residues 2276–2291 (EKLRKEAEQEAARRAQ) show a composition bias toward basic and acidic residues. Serine 2634 is modified (phosphoserine). An N6-acetyllysine modification is found at lysine 2639. Residues 2671–2710 (QEEQQRQQQQMEQEKQELVASMEEARRRQREAEEGVRRKQ) form a disordered region. The span at 2682-2710 (EQEKQELVASMEEARRRQREAEEGVRRKQ) shows a compositional bias: basic and acidic residues. A globular 2 region spans residues 2759–4687 (QAAATKALPN…SLGGPESAVA (1929 aa)). Serine 2777 is modified (phosphoserine). Residue tyrosine 2784 is modified to Phosphotyrosine. Plectin repeat units follow at residues 2791–2828 (QKVP…REDV), 2829–2866 (RHYL…PGTA), 2867–2904 (LILL…PELH), 2905–2942 (HKLL…RDHG), 2943–2980 (IRLL…EEMN), and 2984–3018 (ADPS…PETG). Phosphoserine is present on serine 2805. Residue threonine 2889 is modified to Phosphothreonine. The residue at position 3036 (tyrosine 3036) is a Phosphotyrosine. Lysine 3056 and lysine 3094 each carry N6-acetyllysine. Plectin repeat units follow at residues 3119 to 3156 (ALVP…ADEV), 3157 to 3194 (RQAL…PEVA), 3195 to 3232 (VALL…PEMH), 3233 to 3270 (EKLL…REQG), 3271 to 3308 (LRLL…KETN), and 3311 to 3346 (LTSP…QLTG). Phosphotyrosine is present on tyrosine 3365. Position 3423 is an N6-acetyllysine (lysine 3423). Plectin repeat units lie at residues 3488 to 3525 (RTLL…ASTA), 3526 to 3563 (TLLL…PELH), 3564 to 3601 (EKLL…RDHA), 3602 to 3639 (IRLL…EEMN), and 3643 to 3677 (ADPS…PETG). Serine 3583 carries the phosphoserine modification. At threonine 3788 the chain carries Phosphothreonine. Tyrosine 3793 carries the post-translational modification Phosphotyrosine. Plectin repeat units follow at residues 3823–3860 (WRYL…AEVA), 3861–3898 (RLLL…PELH), 3899–3936 (DRLL…AEEA), 3937–3974 (LRLL…KDTH), and 3978–4011 (SEPS…DNSG). Threonine 4033 carries the post-translational modification Phosphothreonine. A Phosphoserine modification is found at serine 4057. 6 Plectin repeats span residues 4066–4103 (QKFL…PGTA), 4104–4141 (FELL…PEFK), 4142–4179 (DKLL…KDHG), 4180–4217 (IRLL…EEMN), 4221–4255 (TDPS…PQTG), and 4268–4308 (RKTS…HQTY). The binding to intermediate filaments stretch occupies residues 4253 to 4303 (QTGLCLLPLKEKKRERKTSSKSSVRKRRVVIVDPETGKEMSVYEAYRKGLI). A phosphoserine mark is found at serine 4385, serine 4387, serine 4388, serine 4389, serine 4392, serine 4393, serine 4394, and serine 4395. Tyrosine 4396 bears the Phosphotyrosine mark. Phosphoserine is present on residues serine 4399 and serine 4409. Plectin repeat units lie at residues 4411–4448 (SDPT…NITG), 4449–4486 (QRLL…KIMV), 4487–4524 (DRIN…YEAG), 4525–4562 (QRFL…ARTA), and 4563–4600 (QKLR…EGTG). Threonine 4414 is subject to Phosphothreonine. Threonine 4542 bears the Phosphothreonine; by CDK1 mark. A phosphoserine mark is found at serine 4610 and serine 4616. Residues 4614-4674 (YYSPYSVSGS…SGYGRRYASG (61 aa)) are compositionally biased toward low complexity. A disordered region spans residues 4614 to 4687 (YYSPYSVSGS…SLGGPESAVA (74 aa)). The residue at position 4618 (tyrosine 4618) is a Phosphotyrosine. Phosphoserine is present on residues serine 4619, serine 4621, and serine 4625. Threonine 4626 is modified (phosphothreonine). The interval 4628 to 4643 (GSRTGSRTGSRAGSRR) is 4 X 4 AA tandem repeats of G-S-R-X. The residue at position 4629 (serine 4629) is a Phosphoserine. Arginine 4630 and arginine 4643 each carry omega-N-methylarginine. Residues serine 4645 and serine 4678 each carry the phosphoserine modification.

The protein belongs to the plakin or cytolinker family. As to quaternary structure, homodimer or homotetramer. Interacts (via actin-binding domain) with SYNE3. Interacts (via calponin-homology (CH) 1 domain) with VIM (via rod region). Interacts (via N-terminus) with DST isoform 2 (via N-terminus). Interacts with FER. Interacts with TOR1A. Interacts with ANK3. Identified in complexes that contain VIM, EZR, AHNAK, BFSP1, BFSP2, ANK2, PLEC, PRX and spectrin. Phosphorylated by CDK1; regulates dissociation from intermediate filaments during mitosis. Isoform 2 is phosphorylated on Ser-21 and Tyr-26. Widely expressed with highest expression in skeletal muscle and lowest in thymus.

The protein resides in the cytoplasm. Its subcellular location is the cytoskeleton. It is found in the cell junction. The protein localises to the hemidesmosome. It localises to the cell projection. The protein resides in the podosome. Its function is as follows. Interlinks intermediate filaments with microtubules and microfilaments and anchors intermediate filaments to desmosomes or hemidesmosomes. May be involved not only in the cross-linking and stabilization of cytoskeletal intermediate filaments network, but also in the regulation of their dynamics. The polypeptide is Plectin (Plec) (Rattus norvegicus (Rat)).